The sequence spans 484 residues: Glycogen synthase (484 aa).

K15 provides a ligand contact to ADP-alpha-D-glucose.

It belongs to the glycosyltransferase 1 family. Bacterial/plant glycogen synthase subfamily.

The enzyme catalyses [(1-&gt;4)-alpha-D-glucosyl](n) + ADP-alpha-D-glucose = [(1-&gt;4)-alpha-D-glucosyl](n+1) + ADP + H(+). It functions in the pathway glycan biosynthesis; glycogen biosynthesis. Its function is as follows. Synthesizes alpha-1,4-glucan chains using ADP-glucose. This chain is Glycogen synthase, found in Geotalea daltonii (strain DSM 22248 / JCM 15807 / FRC-32) (Geobacter daltonii).